A 252-amino-acid polypeptide reads, in one-letter code: Trans-aconitate 2-methyltransferase (252 aa).

This sequence belongs to the methyltransferase superfamily. Tam family.

The protein resides in the cytoplasm. It catalyses the reaction trans-aconitate + S-adenosyl-L-methionine = (E)-3-(methoxycarbonyl)pent-2-enedioate + S-adenosyl-L-homocysteine. Its function is as follows. Catalyzes the S-adenosylmethionine monomethyl esterification of trans-aconitate. The polypeptide is Trans-aconitate 2-methyltransferase (Escherichia coli (strain UTI89 / UPEC)).